The following is a 190-amino-acid chain: Potassium-transporting ATPase KdpC subunit (190 aa).

The helical transmembrane segment at 10-30 (TFLFLLLITGGVYPLLTTALG) threads the bilayer.

Belongs to the KdpC family. The system is composed of three essential subunits: KdpA, KdpB and KdpC.

It localises to the cell inner membrane. Part of the high-affinity ATP-driven potassium transport (or Kdp) system, which catalyzes the hydrolysis of ATP coupled with the electrogenic transport of potassium into the cytoplasm. This subunit acts as a catalytic chaperone that increases the ATP-binding affinity of the ATP-hydrolyzing subunit KdpB by the formation of a transient KdpB/KdpC/ATP ternary complex. The polypeptide is Potassium-transporting ATPase KdpC subunit (Escherichia coli O6:H1 (strain CFT073 / ATCC 700928 / UPEC)).